The chain runs to 579 residues: Zinc finger protein 382 (579 aa).

Residues 1 to 12 (MGRPGRKPRGRA) show a composition bias toward basic residues. Residues 1–37 (MGRPGRKPRGRARPGLFPFPKEELRQGGSSPANLNAM) are disordered. Positions 12-135 (ARPGLFPFPK…DKPPKSIVII (124 aa)) are mediates interaction with TRIM28. Polar residues predominate over residues 27 to 36 (GGSSPANLNA). Represses transcription regions lie at residues 40-81 (GPVS…FISV) and 105-240 (IFPS…PEQR). One can recognise a KRAB domain in the interval 42 to 113 (VSFKDVTVDF…RIFPSQSYLE (72 aa)). A C2H2-type 1; degenerate zinc finger spans residues 241-263 (FEYNKCDSSFLMTGVEFPHGRAH). 9 C2H2-type zinc fingers span residues 325-347 (FQCP…ERIH), 353-375 (YICC…EKTH), 381-403 (YLCV…HKAH), 409-431 (YECT…QRTH), 437-459 (YQCT…QRTH), 465-487 (YICS…QRIH), 493-515 (YICS…YRIH), 521-543 (NGCP…QKIH), and 549-571 (YECQ…QKTH). Positions 325–579 (FQCPYCGNSF…THKTETMRFQ (255 aa)) are required for transcriptional repression activity; probably mediates sequence-specific DNA-binding.

The protein belongs to the krueppel C2H2-type zinc-finger protein family. In terms of assembly, interacts with TRIM28; enhances the transcriptional repressor activity.

Its subcellular location is the nucleus. In terms of biological role, functions as a sequence-specific transcriptional repressor. The polypeptide is Zinc finger protein 382 (Znf382) (Mus musculus (Mouse)).